Reading from the N-terminus, the 21-residue chain is Protein YadW (21 aa).

In Escherichia coli (strain K12), this protein is Protein YadW.